The sequence spans 266 residues: Probable septum site-determining protein MinC (266 aa).

Residues 1–21 (MSEAESTPVEEPVVESTEGSE) are compositionally biased toward low complexity. The tract at residues 1-28 (MSEAESTPVEEPVVESTEGSEAIPEVEQ) is disordered.

The protein belongs to the MinC family. As to quaternary structure, interacts with MinD and FtsZ.

Its function is as follows. Cell division inhibitor that blocks the formation of polar Z ring septums. Rapidly oscillates between the poles of the cell to destabilize FtsZ filaments that have formed before they mature into polar Z rings. Prevents FtsZ polymerization. The sequence is that of Probable septum site-determining protein MinC from Thermosynechococcus vestitus (strain NIES-2133 / IAM M-273 / BP-1).